The sequence spans 649 residues: Threonine--tRNA ligase (649 aa).

Positions Met-1–Thr-60 constitute a TGS domain. Positions Asp-248–Pro-544 are catalytic. The Zn(2+) site is built by Cys-341, His-392, and His-521.

This sequence belongs to the class-II aminoacyl-tRNA synthetase family. As to quaternary structure, homodimer. Zn(2+) is required as a cofactor.

The protein resides in the cytoplasm. The catalysed reaction is tRNA(Thr) + L-threonine + ATP = L-threonyl-tRNA(Thr) + AMP + diphosphate + H(+). Catalyzes the attachment of threonine to tRNA(Thr) in a two-step reaction: L-threonine is first activated by ATP to form Thr-AMP and then transferred to the acceptor end of tRNA(Thr). Also edits incorrectly charged L-seryl-tRNA(Thr). This Deinococcus geothermalis (strain DSM 11300 / CIP 105573 / AG-3a) protein is Threonine--tRNA ligase.